The chain runs to 637 residues: MSEKNEIYDESQIQVLEGLEAVRKRPGMYIGSTGTRGLHHLVYEIVDNSIDEALAGYCSHIKVFIHKDNSVTVSDDGRGMPIGIHHKMKKPTVEVIMTILHAGGKFGGGAYRVSGGLHGVGASVVNALSETCEVEVKTEGHIWKQTYHRGKVASPFEKIGDSDEHGTKIYFKPDPEIFEDTEYDYDTLSQRLRELAFLNKGIKIELTDERHDKNEIFHYEGGLKSFVSYLNRNKEVVFKEPIYVEGSIDSNYSVEIALQYNDGYNENIFSFANNIHTIEGGTHLAGFKTALTRVINDYAKKFGYLKENDKNLSGEDIREGLTAVVSVKLTEPQFEGQTKTKLGNTEVRGIVDSIISERVSTYLEENPQIGKLVIDKALVASRAREAAKKAREITRRKSVLESTSLPGKLADCSSKDAEECEIYIVEGDSAGGSAKQGRNRRFQAILPLRGKIMNVEKQRIDKILNSEEIKAMATAFGGGIGKDFDVSKLRYHKIIIMTDADVDGAHIRTLILTFFYRYMTELISEGHVFIAQPPLYKVTKTRKEYYAYSDKELEDVLQDVGGKDKNTDIQRYKGLGEMNPEQLWETTMNPEQRTLIKVNIEDAMAADEIFTILMGDKVDPRRKFIEENATKVVNLDV.

Residues 420–534 (CEIYIVEGDS…EGHVFIAQPP (115 aa)) enclose the Toprim domain. Positions 426, 499, and 501 each coordinate Mg(2+).

Belongs to the type II topoisomerase GyrB family. As to quaternary structure, heterotetramer, composed of two GyrA and two GyrB chains. In the heterotetramer, GyrA contains the active site tyrosine that forms a transient covalent intermediate with DNA, while GyrB binds cofactors and catalyzes ATP hydrolysis. It depends on Mg(2+) as a cofactor. Mn(2+) serves as cofactor. The cofactor is Ca(2+).

It is found in the cytoplasm. It catalyses the reaction ATP-dependent breakage, passage and rejoining of double-stranded DNA.. A type II topoisomerase that negatively supercoils closed circular double-stranded (ds) DNA in an ATP-dependent manner to modulate DNA topology and maintain chromosomes in an underwound state. Negative supercoiling favors strand separation, and DNA replication, transcription, recombination and repair, all of which involve strand separation. Also able to catalyze the interconversion of other topological isomers of dsDNA rings, including catenanes and knotted rings. Type II topoisomerases break and join 2 DNA strands simultaneously in an ATP-dependent manner. This Clostridium acetobutylicum (strain ATCC 824 / DSM 792 / JCM 1419 / IAM 19013 / LMG 5710 / NBRC 13948 / NRRL B-527 / VKM B-1787 / 2291 / W) protein is DNA gyrase subunit B.